The following is a 159-amino-acid chain: Protein phosphatase 1 regulatory subunit 17 (159 aa).

Disordered regions lie at residues 1–79 and 98–127; these read MSTE…HIPP and RIPK…PALH. Composition is skewed to basic and acidic residues over residues 62-73 and 111-124; these read SDQKKPRRKDTP and SDME…KDTP. Phosphothreonine; by PKG/PRKG1 occurs at positions 72 and 123.

Post-translationally, substrate for cGMP-dependent protein kinase. Phosphorylation of Thr-72 and Thr-123 is required for its phosphatase activity. Phosphorylated by PRKG1 isoform alpha. Expressed in Purkinje cells of the cerebellum, hippocampus, pons, medulla and eye.

In terms of biological role, inhibits phosphatase activities of protein phosphatase 1 (PP1) and protein phosphatase 2A (PP2A) complexes. The sequence is that of Protein phosphatase 1 regulatory subunit 17 (Ppp1r17) from Mus musculus (Mouse).